A 352-amino-acid polypeptide reads, in one-letter code: B1 bradykinin receptor (352 aa).

Residues 1–41 lie on the Extracellular side of the membrane; that stretch reads MASWPPLELQSSNQSQLFPQNATACDNAPEAWDLLHRVLPT. Residues Asn13 and Asn21 are each glycosylated (N-linked (GlcNAc...) asparagine). A helical membrane pass occupies residues 42–62; the sequence is FIISICSFGLLGNLFVLLVFL. The Cytoplasmic segment spans residues 63–72; it reads LPRRRLNVAE. A helical transmembrane segment spans residues 73–93; that stretch reads IYLANLAASDLVFVLGLPFWA. Residues 94-110 are Extracellular-facing; that stretch reads ENIWNQFNWPFGALLCR. A disulfide bond links Cys109 and Cys188. Residues 111 to 131 traverse the membrane as a helical segment; it reads GINGVIKANLFISIFLVVAIS. The Cytoplasmic portion of the chain corresponds to 132 to 153; it reads QDRYCLLVHPMASRRRQRRRQA. The chain crosses the membrane as a helical span at residues 154 to 174; sequence RVTCVLIWVVGGLLSIPTFLL. The Extracellular segment spans residues 175-206; it reads RSIQAVPDLNITACILLLPHEAWHFARIVELN. Asn184 carries an N-linked (GlcNAc...) asparagine glycan. The helical transmembrane segment at 207–227 threads the bilayer; that stretch reads ILAFLLPLAAIVFFNYHILAS. Residues 228-250 lie on the Cytoplasmic side of the membrane; that stretch reads LRGREEVSRTRCGGRKDSKTTAL. A helical membrane pass occupies residues 251 to 271; the sequence is ILTLVVAFLVCWAPYHFFAFL. Over 272–294 the chain is Extracellular; that stretch reads EFLFQVQAIRGCFWEDFIDLGLQ. A helical transmembrane segment spans residues 295-315; that stretch reads LANFLAFTNSSLNPVIYVFVG. The Cytoplasmic segment spans residues 316 to 352; that stretch reads RLFRTKVWELYKQCTPKSLAPISSSHRKEIFQLFWRN. The S-palmitoyl cysteine moiety is linked to residue Cys329.

It belongs to the G-protein coupled receptor 1 family. Bradykinin receptor subfamily. BDKRB1 sub-subfamily.

The protein resides in the cell membrane. In terms of biological role, this is a receptor for bradykinin. Could be a factor in chronic pain and inflammation. The protein is B1 bradykinin receptor (BDKRB1) of Chlorocebus aethiops (Green monkey).